A 284-amino-acid chain; its full sequence is MTKPDLASLEKTIEKAFDERDGINTATRGEVREAVEQSLILLDRGEVRVAEKQADGNWHVNQWLKKAVLLSFRLNPMEVIKGGPGQSSWWDKVPSKFDGWTANEFEKAGFRAVPSCIVRHSAYIAPNAILMPSFVNLGAYVDKGAMIDTWATVGSCAQIGKNVHLSGGVGIGGVLEPMQAGPTIIEDNCFIGARSEVVEGCIVREGSVLGMGVFIGKSTKIVDRATGEVFYGEVPPYSVVVAGTMPGKNVPGENWGPSLYCAVIVKRADEKTRSKTSINELLRD.

Substrate contacts are provided by Arg111 and Asp148.

Belongs to the transferase hexapeptide repeat family. As to quaternary structure, homotrimer.

The protein localises to the cytoplasm. The catalysed reaction is (S)-2,3,4,5-tetrahydrodipicolinate + succinyl-CoA + H2O = (S)-2-succinylamino-6-oxoheptanedioate + CoA. Its pathway is amino-acid biosynthesis; L-lysine biosynthesis via DAP pathway; LL-2,6-diaminopimelate from (S)-tetrahydrodipicolinate (succinylase route): step 1/3. This is 2,3,4,5-tetrahydropyridine-2,6-dicarboxylate N-succinyltransferase from Brucella melitensis biotype 2 (strain ATCC 23457).